We begin with the raw amino-acid sequence, 233 residues long: Endonuclease V (233 aa).

Residues Asp-48 and Asp-116 each contribute to the Mg(2+) site.

This sequence belongs to the endonuclease V family. The cofactor is Mg(2+).

The protein resides in the cytoplasm. The catalysed reaction is Endonucleolytic cleavage at apurinic or apyrimidinic sites to products with a 5'-phosphate.. DNA repair enzyme involved in the repair of deaminated bases. Selectively cleaves double-stranded DNA at the second phosphodiester bond 3' to a deoxyinosine leaving behind the intact lesion on the nicked DNA. In Streptomyces coelicolor (strain ATCC BAA-471 / A3(2) / M145), this protein is Endonuclease V.